The chain runs to 392 residues: Formate-dependent phosphoribosylglycinamide formyltransferase (392 aa).

Residues 20 to 21 and Glu80 contribute to the N(1)-(5-phospho-beta-D-ribosyl)glycinamide site; that span reads EL. ATP is bound by residues Arg112, Lys153, 158–163, 193–196, and Glu201; these read SSGKGQ and EGFV. The ATP-grasp domain maps to 117 to 306; it reads RLAAETLGLP…EFALHVRAIL (190 aa). Residues Glu265 and Glu277 each contribute to the Mg(2+) site. N(1)-(5-phospho-beta-D-ribosyl)glycinamide-binding positions include Asp284, Lys355, and 362–363; that span reads RR.

It belongs to the PurK/PurT family. In terms of assembly, homodimer.

It catalyses the reaction N(1)-(5-phospho-beta-D-ribosyl)glycinamide + formate + ATP = N(2)-formyl-N(1)-(5-phospho-beta-D-ribosyl)glycinamide + ADP + phosphate + H(+). The protein operates within purine metabolism; IMP biosynthesis via de novo pathway; N(2)-formyl-N(1)-(5-phospho-D-ribosyl)glycinamide from N(1)-(5-phospho-D-ribosyl)glycinamide (formate route): step 1/1. In terms of biological role, involved in the de novo purine biosynthesis. Catalyzes the transfer of formate to 5-phospho-ribosyl-glycinamide (GAR), producing 5-phospho-ribosyl-N-formylglycinamide (FGAR). Formate is provided by PurU via hydrolysis of 10-formyl-tetrahydrofolate. This chain is Formate-dependent phosphoribosylglycinamide formyltransferase, found in Aeromonas hydrophila subsp. hydrophila (strain ATCC 7966 / DSM 30187 / BCRC 13018 / CCUG 14551 / JCM 1027 / KCTC 2358 / NCIMB 9240 / NCTC 8049).